The chain runs to 294 residues: RAB7A-interacting MON1-CCZ1 complex subunit 1 (294 aa).

An N-acetylalanine modification is found at A2.

It belongs to the RIMOC1 family. As to quaternary structure, interacts with the MON1A-CCZ1B complex. Interacts with GDP-bound RAB7A and promotes its interaction with the MON1A-CCZ1B complex.

It localises to the cytoplasm. It is found in the cytosol. In terms of biological role, plays an important role in the removal of damaged mitochondria via mitophagy by controlling the stability and localization of RAB7A. Required for the recruitment of RAB7A and ATG9A vesicles to damaged mitochondria and promotes the stability of RAB7A by inhibiting its proteasomal degradation during mitophagy. The polypeptide is RAB7A-interacting MON1-CCZ1 complex subunit 1 (Mus musculus (Mouse)).